We begin with the raw amino-acid sequence, 428 residues long: GTPase Obg (428 aa).

The 158-residue stretch at 1 to 158 (MFVDQVKIYV…RDVILELKVL (158 aa)) folds into the Obg domain. A disordered region spans residues 117–145 (ARGGRGGRGNSRFATPTNPAPEIAENGEP). The OBG-type G domain occupies 159–329 (ADVGLVGFPS…LLFEVANLLE (171 aa)). GTP contacts are provided by residues 165-172 (GFPSVGKS), 190-194 (FTTIV), 212-215 (DLPG), 282-285 (NKMD), and 310-312 (SAV). Residues Ser-172 and Thr-192 each coordinate Mg(2+). The OCT domain maps to 350–428 (KLETEGVKFD…ILEYEFEFID (79 aa)).

This sequence belongs to the TRAFAC class OBG-HflX-like GTPase superfamily. OBG GTPase family. As to quaternary structure, monomer. Mg(2+) is required as a cofactor.

The protein resides in the cytoplasm. Functionally, an essential GTPase which binds GTP, GDP and possibly (p)ppGpp with moderate affinity, with high nucleotide exchange rates and a fairly low GTP hydrolysis rate. Plays a role in control of the cell cycle, stress response, ribosome biogenesis and in those bacteria that undergo differentiation, in morphogenesis control. The protein is GTPase Obg of Bacillus cereus (strain ATCC 10987 / NRS 248).